Reading from the N-terminus, the 225-residue chain is Protein-L-isoaspartate O-methyltransferase 2 (225 aa).

S73 is a catalytic residue.

This sequence belongs to the methyltransferase superfamily. L-isoaspartyl/D-aspartyl protein methyltransferase family.

It is found in the cytoplasm. It catalyses the reaction [protein]-L-isoaspartate + S-adenosyl-L-methionine = [protein]-L-isoaspartate alpha-methyl ester + S-adenosyl-L-homocysteine. Catalyzes the methyl esterification of L-isoaspartyl residues in peptides and proteins that result from spontaneous decomposition of normal L-aspartyl and L-asparaginyl residues. It plays a role in the repair and/or degradation of damaged proteins. This Pelobacter propionicus (strain DSM 2379 / NBRC 103807 / OttBd1) protein is Protein-L-isoaspartate O-methyltransferase 2.